The primary structure comprises 193 residues: BH3-interacting domain death agonist (193 aa).

Residues 87 to 101 (IAAQLAEIGDQLDKQ) carry the BH3 motif.

In terms of assembly, forms heterodimers either with the pro-apoptotic protein BAX or the anti-apoptotic protein Bcl-2.

Its subcellular location is the cytoplasm. It localises to the mitochondrion outer membrane. Its function is as follows. Induces caspases and apoptosis. Counters the protective effect of Bcl-2. In Gallus gallus (Chicken), this protein is BH3-interacting domain death agonist (BID).